The chain runs to 165 residues: E3 ubiquitin ligase complex SCF subunit sconC (165 aa).

The segment at 106–165 is interaction with the F-box domain of F-box proteins; it reads ILAANYLDIKALLDVGCKTVANMIKGKSPEEIRKTFNIQNDFTPEEEDQIRRENEWAEDR.

The protein belongs to the SKP1 family. In terms of assembly, component of the SCF (SKP1-CUL1-F-box protein) E3 ubiquitin ligase complexes.

Its pathway is protein modification; protein ubiquitination. In terms of biological role, essential component of the SCF (SKP1-CUL1-F-box protein) E3 ubiquitin ligase complexes, which mediate the ubiquitination and subsequent proteasomal degradation of target proteins. Controls sulfur metabolite repression, probably by mediating the inactivation or degradation of the metR transcription factor. The protein is E3 ubiquitin ligase complex SCF subunit sconC (sconC) of Arthroderma otae (Microsporum canis).